The chain runs to 109 residues: Protein reprimo (109 aa).

N-linked (GlcNAc...) asparagine glycans are attached at residues N7 and N18. The chain crosses the membrane as a helical span at residues 56–76 (VVQIAVMCVLSLTVVFGIFFL). The residue at position 98 (S98) is a Phosphoserine.

Belongs to the reprimo family.

It localises to the cytoplasm. Its subcellular location is the membrane. In terms of biological role, may be involved in the regulation of p53-dependent G2 arrest of the cell cycle. Seems to induce cell cycle arrest by inhibiting CDK1 activity and nuclear translocation of the CDC2 cyclin B1 complex. The chain is Protein reprimo (RPRM) from Bos taurus (Bovine).